A 323-amino-acid polypeptide reads, in one-letter code: Lipoyl synthase (323 aa).

The interval 1–27 (MVTILDRTSSDEKRIRHPEKAHRPDTE) is disordered. Cysteine 61, cysteine 66, cysteine 72, cysteine 87, cysteine 91, cysteine 94, and serine 300 together coordinate [4Fe-4S] cluster. A Radical SAM core domain is found at 73 to 289 (WEKKHATFMI…ETVAYAKGFL (217 aa)).

This sequence belongs to the radical SAM superfamily. Lipoyl synthase family. The cofactor is [4Fe-4S] cluster.

It localises to the cytoplasm. The enzyme catalyses [[Fe-S] cluster scaffold protein carrying a second [4Fe-4S](2+) cluster] + N(6)-octanoyl-L-lysyl-[protein] + 2 oxidized [2Fe-2S]-[ferredoxin] + 2 S-adenosyl-L-methionine + 4 H(+) = [[Fe-S] cluster scaffold protein] + N(6)-[(R)-dihydrolipoyl]-L-lysyl-[protein] + 4 Fe(3+) + 2 hydrogen sulfide + 2 5'-deoxyadenosine + 2 L-methionine + 2 reduced [2Fe-2S]-[ferredoxin]. It participates in protein modification; protein lipoylation via endogenous pathway; protein N(6)-(lipoyl)lysine from octanoyl-[acyl-carrier-protein]: step 2/2. Its function is as follows. Catalyzes the radical-mediated insertion of two sulfur atoms into the C-6 and C-8 positions of the octanoyl moiety bound to the lipoyl domains of lipoate-dependent enzymes, thereby converting the octanoylated domains into lipoylated derivatives. This is Lipoyl synthase from Agrobacterium fabrum (strain C58 / ATCC 33970) (Agrobacterium tumefaciens (strain C58)).